The primary structure comprises 217 residues: Large ribosomal subunit protein uL1 (217 aa).

This sequence belongs to the universal ribosomal protein uL1 family. Part of the 50S ribosomal subunit.

Functionally, binds directly to 23S rRNA. Probably involved in E site tRNA release. Its function is as follows. Protein L1 is also a translational repressor protein, it controls the translation of its operon by binding to its mRNA. The sequence is that of Large ribosomal subunit protein uL1 from Thermoplasma volcanium (strain ATCC 51530 / DSM 4299 / JCM 9571 / NBRC 15438 / GSS1).